Consider the following 58-residue polypeptide: UPF0434 protein NT01EI_2448 (58 aa).

The protein belongs to the UPF0434 family.

The sequence is that of UPF0434 protein NT01EI_2448 from Edwardsiella ictaluri (strain 93-146).